Reading from the N-terminus, the 652-residue chain is Pesticidal crystal protein Cry3Bb (652 aa).

The segment covering 1 to 12 (MNPNNRSEHDTI) has biased composition (basic and acidic residues). Disordered regions lie at residues 1 to 33 (MNPNNRSEHDTIKVTPNSELQTNHNQYPLADNP) and 433 to 465 (KNETSTQTYDSKRNNGHVSAQDSIDQLPPETTD). A compositionally biased stretch (polar residues) spans 14 to 33 (VTPNSELQTNHNQYPLADNP).

It belongs to the delta endotoxin family. As to quaternary structure, monomer.

Its function is as follows. Promotes colloidosmotic lysis by binding to the midgut epithelial cells of Coleoptera. Has moderate level of toxicity to southern corn rootworm. The protein is Pesticidal crystal protein Cry3Bb (cry3Bb) of Bacillus thuringiensis.